The following is a 285-amino-acid chain: tRNA uridine(34) hydroxylase (285 aa).

A Rhodanese domain is found at 130–225 (RGDDVVFFDG…YGEAFGDTGL (96 aa)). Catalysis depends on Cys185, which acts as the Cysteine persulfide intermediate.

It belongs to the TrhO family.

The catalysed reaction is uridine(34) in tRNA + AH2 + O2 = 5-hydroxyuridine(34) in tRNA + A + H2O. In terms of biological role, catalyzes oxygen-dependent 5-hydroxyuridine (ho5U) modification at position 34 in tRNAs. This chain is tRNA uridine(34) hydroxylase, found in Rhodococcus jostii (strain RHA1).